A 463-amino-acid polypeptide reads, in one-letter code: D(5)-like dopamine receptor (463 aa).

The Extracellular portion of the chain corresponds to 1-39; sequence MENFYNETEPTEPRGGVDPLRVVTAAEDVPAPVGGVSVR. Residue N6 is glycosylated (N-linked (GlcNAc...) asparagine). A helical membrane pass occupies residues 40 to 65; sequence ALTGCVLCALIVSTLLGNTLVCAAVI. Residues 66-76 are Cytoplasmic-facing; it reads KFRHLRSKVTN. A helical membrane pass occupies residues 77–103; the sequence is AFVVSLAVSDLFVAVLVMPWRAVSEVA. Residues 104–112 lie on the Extracellular side of the membrane; sequence GVWLFGRFC. C112 and C194 are joined by a disulfide. Residues 113–135 traverse the membrane as a helical segment; it reads DTWVAFDIMCSTASILNLCVISM. Residues 136 to 154 lie on the Cytoplasmic side of the membrane; the sequence is DRYWAISNPFRYERRMTRR. Residues 155 to 180 traverse the membrane as a helical segment; the sequence is FAFLMIAVAWTLSVLISFIPVQLNWH. Topologically, residues 181-198 are extracellular; sequence RADNNSSAHEQGDCNASL. A helical transmembrane segment spans residues 199 to 223; the sequence is NRTYAISSSLISFYIPVLIMVGTYT. The Cytoplasmic segment spans residues 224-273; it reads RIFRIAQTQIRRISSLERAAGQRAQNQSHRASTHDESALKTSFKRETKVL. A helical membrane pass occupies residues 274–301; sequence KTLSVIMGVFVFCWLPFFVLNCVVPFCD. Topologically, residues 302-315 are extracellular; it reads VDKVGEPPCVSDTT. A helical membrane pass occupies residues 316–337; sequence FNIFVWFGWANSSLNPVIYAFN. Residues 338–463 are Cytoplasmic-facing; that stretch reads ADFRKAFTTI…PGQIQDLGDL (126 aa).

The protein belongs to the G-protein coupled receptor 1 family.

It localises to the cell membrane. Receptor for dopamine. In Takifugu rubripes (Japanese pufferfish), this protein is D(5)-like dopamine receptor (dl).